A 287-amino-acid polypeptide reads, in one-letter code: Ret finger protein-like 4A (287 aa).

The RING-type; degenerate zinc-finger motif lies at Cys11–Ser53. Residues Glu78 to Gly278 enclose the B30.2/SPRY domain.

In terms of assembly, interacts with PSMB1, UBE2A and CCNB1. As to expression, expressed in the ovaries and oocytes (at protein level). Expression restricted to gonads. In testis, present at later stages of spermatogeneis and abundant in elongating spermatids.

Its subcellular location is the cytoplasm. The protein resides in the nucleus. In Mus musculus (Mouse), this protein is Ret finger protein-like 4A (Rfpl4a).